A 198-amino-acid chain; its full sequence is Recombination protein RecR (198 aa).

The C4-type zinc-finger motif lies at Cys-57–Cys-72. Residues Thr-80–Ala-175 form the Toprim domain.

It belongs to the RecR family.

Functionally, may play a role in DNA repair. It seems to be involved in an RecBC-independent recombinational process of DNA repair. It may act with RecF and RecO. The protein is Recombination protein RecR of Streptococcus pneumoniae serotype 2 (strain D39 / NCTC 7466).